A 103-amino-acid polypeptide reads, in one-letter code: NADH-quinone oxidoreductase subunit K 2 (103 aa).

The next 3 membrane-spanning stretches (helical) occupy residues 7-27, 31-51, and 63-83; these read LAWY…GFMI, IITI…TFVA, and IFVF…LGII.

The protein belongs to the complex I subunit 4L family. In terms of assembly, NDH-1 is composed of 14 different subunits. Subunits NuoA, H, J, K, L, M, N constitute the membrane sector of the complex.

The protein resides in the cell inner membrane. The catalysed reaction is a quinone + NADH + 5 H(+)(in) = a quinol + NAD(+) + 4 H(+)(out). In terms of biological role, NDH-1 shuttles electrons from NADH, via FMN and iron-sulfur (Fe-S) centers, to quinones in the respiratory chain. The immediate electron acceptor for the enzyme in this species is believed to be ubiquinone. Couples the redox reaction to proton translocation (for every two electrons transferred, four hydrogen ions are translocated across the cytoplasmic membrane), and thus conserves the redox energy in a proton gradient. The chain is NADH-quinone oxidoreductase subunit K 2 from Koribacter versatilis (strain Ellin345).